The primary structure comprises 365 residues: tRNA(Met) cytidine acetate ligase (365 aa).

Residues 7–20 (IAEF…HKYL), Gly-96, Asn-152, and Arg-175 each bind ATP.

It belongs to the TmcAL family.

It localises to the cytoplasm. The catalysed reaction is cytidine(34) in elongator tRNA(Met) + acetate + ATP = N(4)-acetylcytidine(34) in elongator tRNA(Met) + AMP + diphosphate. Functionally, catalyzes the formation of N(4)-acetylcytidine (ac(4)C) at the wobble position of elongator tRNA(Met), using acetate and ATP as substrates. First activates an acetate ion to form acetyladenylate (Ac-AMP) and then transfers the acetyl group to tRNA to form ac(4)C34. The protein is tRNA(Met) cytidine acetate ligase of Streptococcus pneumoniae (strain JJA).